The primary structure comprises 120 residues: MAEPAKKKPKKLPKKDKGQKDIKRKKKESYTVKIYIFKVLKQVHPDIGISSKAMGIMNSFINDIFEKLASEASRLARYNKKSTITPREIQTAVRLLLPGEVAKHKVSEATKAVTKFTSGA.

The tract at residues 1–26 (MAEPAKKKPKKLPKKDKGQKDIKRKK) is disordered. Ala2 is modified (blocked amino end (Ala)). N6-acetyllysine is present on residues Lys7, Lys10, and Lys11. Lys115 is covalently cross-linked (Glycyl lysine isopeptide (Lys-Gly) (interchain with G-Cter in ubiquitin)).

The protein belongs to the histone H2B family. As to quaternary structure, the nucleosome is a histone octamer containing two molecules each of H2A, H2B, H3 and H4 assembled in one H3-H4 heterotetramer and two H2A-H2B heterodimers. The octamer wraps approximately 147 bp of DNA. In terms of processing, can be acetylated to form H2BK6ac, H2BK33ac and H2BK34ac. Post-translationally, monoubiquitinated to form H2BK143ub1; may give a specific tag for epigenetic transcriptional activation.

It localises to the nucleus. The protein localises to the chromosome. Core component of nucleosome. Nucleosomes wrap and compact DNA into chromatin, limiting DNA accessibility to the cellular machineries which require DNA as a template. Histones thereby play a central role in transcription regulation, DNA repair, DNA replication and chromosomal stability. DNA accessibility is regulated via a complex set of post-translational modifications of histones, also called histone code, and nucleosome remodeling. In Pisum sativum (Garden pea), this protein is Histone H2B.